We begin with the raw amino-acid sequence, 184 residues long: Phosphopantetheine adenylyltransferase (184 aa).

S8 contributes to the substrate binding site. ATP-binding positions include 8 to 9 (SF) and H16. Residues K40, L74, and R88 each coordinate substrate. ATP-binding positions include 89–91 (GLR), E99, and 123–129 (WSFVSST).

This sequence belongs to the bacterial CoaD family. In terms of assembly, homohexamer. The cofactor is Mg(2+).

It localises to the cytoplasm. It carries out the reaction (R)-4'-phosphopantetheine + ATP + H(+) = 3'-dephospho-CoA + diphosphate. It participates in cofactor biosynthesis; coenzyme A biosynthesis; CoA from (R)-pantothenate: step 4/5. Reversibly transfers an adenylyl group from ATP to 4'-phosphopantetheine, yielding dephospho-CoA (dPCoA) and pyrophosphate. The sequence is that of Phosphopantetheine adenylyltransferase from Deinococcus geothermalis (strain DSM 11300 / CIP 105573 / AG-3a).